We begin with the raw amino-acid sequence, 243 residues long: Retrotransposon Gag-like protein 6 (243 aa).

The span at 1-12 shows a compositional bias: polar residues; it reads MVQPRTSKTESP. The interval 1-22 is disordered; sequence MVQPRTSKTESPASAPGASAQM. Residues 29–69 adopt a coiled-coil conformation; sequence LTSLRLTNSALRREASTLRAEKANLTNMLESVMAELTLLRT. Disordered stretches follow at residues 84–105 and 218–243; these read SAIT…PEPF and TGSC…GRNL. The segment covering 85 to 94 has biased composition (polar residues); it reads AITSNGTRPM.

Belongs to the LDOC1 family. In terms of tissue distribution, widely expressed.

This chain is Retrotransposon Gag-like protein 6, found in Mus musculus (Mouse).